The following is a 310-amino-acid chain: Membrane protein insertase YidC 2 (310 aa).

An N-terminal signal peptide occupies residues 1 to 23; it reads MKKTLKRILFSSLSLSILLLLTG. The N-palmitoyl cysteine moiety is linked to residue C24. C24 carries the S-diacylglycerol cysteine lipid modification. Transmembrane regions (helical) follow at residues 33–53, 58–78, 135–155, 180–200, and 219–239; these read PYGV…TYFA, LGFG…ILPL, FGGI…AIFF, LTVI…QGVP, and VFMS…GGIF. The disordered stretch occupies residues 262–310; the sequence is EYTKNPPKAYKSNNARKDVTSSTKTTESNQAIITSKKTNRNAGKQKRRG. Residues 281-297 are compositionally biased toward polar residues; that stretch reads TSSTKTTESNQAIITSK. The span at 298 to 310 shows a compositional bias: basic residues; the sequence is KTNRNAGKQKRRG.

Belongs to the OXA1/ALB3/YidC family. Type 2 subfamily.

The protein localises to the cell membrane. Its function is as follows. Required for the insertion and/or proper folding and/or complex formation of integral membrane proteins into the membrane. Involved in integration of membrane proteins that insert both dependently and independently of the Sec translocase complex, as well as at least some lipoproteins. The sequence is that of Membrane protein insertase YidC 2 from Streptococcus agalactiae serotype III (strain NEM316).